We begin with the raw amino-acid sequence, 527 residues long: Transcription initiation factor TFIID subunit 6b (527 aa).

Positions 3-99 (TKESIEVIAQ…NLEPTSGSKS (97 aa)) constitute a Histone-fold domain. Disordered stretches follow at residues 410 to 442 (SPPT…THQP) and 462 to 492 (MRGT…PKTS). 2 stretches are compositionally biased toward polar residues: residues 416-427 (VWKTNGKLTSPR) and 462-473 (MRGTTTVPQQSH).

The protein belongs to the TAF6 family. In terms of assembly, component of the TFIID complex. TFIID is composed of TATA binding protein (TBP) and a number of TBP-associated factors (TAFs) whose MWs range from 14-217 kDa. Interacts with TAF5 and TAF9. As to expression, expressed in roots, leaves, inflorescences and siliques.

It localises to the nucleus. Functionally, TAFs are components of the transcription factor IID (TFIID) complex that is essential for mediating regulation of RNA polymerase transcription. Not redundant with TAF6. The polypeptide is Transcription initiation factor TFIID subunit 6b (TAF6B) (Arabidopsis thaliana (Mouse-ear cress)).